The chain runs to 208 residues: Probable molybdenum cofactor guanylyltransferase (208 aa).

GTP contacts are provided by residues 12–14, K24, D72, and D101; that span reads IAG. D101 lines the Mg(2+) pocket.

The protein belongs to the MobA family. Mg(2+) is required as a cofactor.

The protein resides in the cytoplasm. It catalyses the reaction Mo-molybdopterin + GTP + H(+) = Mo-molybdopterin guanine dinucleotide + diphosphate. Transfers a GMP moiety from GTP to Mo-molybdopterin (Mo-MPT) cofactor (Moco or molybdenum cofactor) to form Mo-molybdopterin guanine dinucleotide (Mo-MGD) cofactor. The sequence is that of Probable molybdenum cofactor guanylyltransferase from Chloroflexus aggregans (strain MD-66 / DSM 9485).